We begin with the raw amino-acid sequence, 617 residues long: uncharacterized protein (617 aa).

A B12-binding N-terminal domain is found at 33-134; sequence TEDDFRGEKF…FXNATKQKGS (102 aa). Methylcob(III)alamin is bound by residues glutamate 84, 146 to 150, histidine 149, serine 194, threonine 198, and alanine 251; that span reads GDVHD. A B12-binding domain is found at 136 to 272; that stretch reads NGKVVIATVK…NPEGRAALWE (137 aa). The AdoMet activation domain maps to 288–617; it reads SKPLRKQLSI…MMKWLGVAMK (330 aa). S-adenosyl-L-methionine contacts are provided by residues aspartate 337, arginine 528, and 583 to 584; that span reads YF.

This sequence belongs to the vitamin-B12 dependent methionine synthase family.

This is an uncharacterized protein from Haemophilus influenzae (strain ATCC 51907 / DSM 11121 / KW20 / Rd).